Consider the following 348-residue polypeptide: tRNA N6-adenosine threonylcarbamoyltransferase (348 aa).

2 residues coordinate Fe cation: His120 and His124. Residues 143-147 (LVSGG), Asp176, Gly189, and Asn282 each bind substrate. Asp310 is a binding site for Fe cation.

Belongs to the KAE1 / TsaD family. It depends on Fe(2+) as a cofactor.

It is found in the cytoplasm. It carries out the reaction L-threonylcarbamoyladenylate + adenosine(37) in tRNA = N(6)-L-threonylcarbamoyladenosine(37) in tRNA + AMP + H(+). Functionally, required for the formation of a threonylcarbamoyl group on adenosine at position 37 (t(6)A37) in tRNAs that read codons beginning with adenine. Is involved in the transfer of the threonylcarbamoyl moiety of threonylcarbamoyl-AMP (TC-AMP) to the N6 group of A37, together with TsaE and TsaB. TsaD likely plays a direct catalytic role in this reaction. This chain is tRNA N6-adenosine threonylcarbamoyltransferase, found in Paracidovorax citrulli (strain AAC00-1) (Acidovorax citrulli).